The primary structure comprises 519 residues: Cytosol aminopeptidase (519 aa).

Ser42 carries the phosphoserine modification. N6-succinyllysine is present on Lys45. A Phosphoserine modification is found at Ser54. N6-succinyllysine occurs at positions 61 and 103. Ser180 and Ser194 each carry phosphoserine. Residues Leu202, Met203, and Thr205 each coordinate Zn(2+). The residue at position 221 (Lys221) is an N6-acetyllysine; alternate. Lys221 carries the N6-succinyllysine; alternate modification. Ser238 carries the phosphoserine modification. Lys282 and Asp287 together coordinate Zn(2+). Residues Lys282, Asp287, Ser292, and Lys294 each coordinate substrate. Asp287 contacts Mg(2+). The active site involves Lys294. Zn(2+)-binding residues include Arg303, Asp305, Asp364, and Glu366. Substrate-binding residues include Asp305 and Asp364. Mg(2+)-binding residues include Asp364 and Glu366. Arg368 is a catalytic residue. N6-acetyllysine; alternate is present on Lys455. N6-succinyllysine; alternate is present on Lys455. The residue at position 476 (Lys476) is an N6-succinyllysine. Residue Lys489 is modified to N6-acetyllysine; alternate. Position 489 is an N6-succinyllysine; alternate (Lys489).

It belongs to the peptidase M17 family. As to quaternary structure, homohexamer. Zn(2+) is required as a cofactor. Requires Mn(2+) as cofactor.

It localises to the cytoplasm. The enzyme catalyses Release of an N-terminal amino acid, Xaa-|-Yaa-, in which Xaa is preferably Leu, but may be other amino acids including Pro although not Arg or Lys, and Yaa may be Pro. Amino acid amides and methyl esters are also readily hydrolyzed, but rates on arylamides are exceedingly low.. It carries out the reaction an S-substituted L-cysteinylglycine + H2O = an S-substituted L-cysteine + glycine. It catalyses the reaction L-cysteinylglycine + H2O = L-cysteine + glycine. The catalysed reaction is S-benzyl-L-cysteinylglycine + H2O = S-benzyl-L-cysteine + glycine. The enzyme catalyses Release of N-terminal proline from a peptide.. Its function is as follows. Cytosolic metallopeptidase that catalyzes the removal of unsubstituted N-terminal hydrophobic amino acids from various peptides. The presence of Zn(2+) ions is essential for the peptidase activity, and the association with other cofactors can modulate the substrate spectificity of the enzyme. For instance, in the presence of Mn(2+), it displays a specific Cys-Gly hydrolyzing activity of Cys-Gly-S-conjugates. Involved in the metabolism of glutathione and in the degradation of glutathione S-conjugates, which may play a role in the control of the cell redox status. In Homo sapiens (Human), this protein is Cytosol aminopeptidase.